We begin with the raw amino-acid sequence, 1151 residues long: MSSNIHANHLSLDASSSSSSSSSSSSSSSSSSSVHEPKMDALIIPVTMEVPCDSRGQRMWWAFLASSMVTFFGGLFIILLWRTLKYLWTVCCHCGGKTKEAQKINNGSSQADGTLKPVDEKEEAVAAEVGWMTSVKDWAGVMISAQTLTGRVLVVLVFALSIGALVIYFIDSSNPIESCQNFYKDFTLQIDMAFNVFFLLYFGLRFIAANDKLWFWLEVNSVVDFFTVPPVFVSVYLNRSWLGLRFLRALRLIQFSEILQFLNILKTSNSIKLVNLLSIFISTWLTAAGFIHLVENSGDPWENFQNNQALTYWECVYLLMVTMSTVGYGDVYAKTTLGRLFMVFFILGGLAMFASYVPEIIELIGNRKKYGGSYSAVSGRKHIVVCGHITLESVSNFLKDFLHKDRDDVNVEIVFLHNISPNLELEALFKRHFTQVEFYQGSVLNPHDLARVKIESADACLILANKYCADPDAEDASNIMRVISIKNYHPKIRIITQMLQYHNKAHLLNIPSWNWKEGDDAICLAELKLGFIAQSCLAQGLSTMLANLFSMRSFIKIEEDTWQKYYLEGVSNEMYTEYLSSAFVGLSFPTVCELCFVKLKLLMIAIEYKSANRESRILINPGNHLKIQEGTLGFFIASDAKEVKRAFFYCKACHDDITDPKRIKKCGCKRLEDEQPSTLSPKKKQRNGGMRNSPNSSPKLMRHDPLLIPGNDQIDNMDSNVKKYDSTGMFHWCAPKEIEKVILTRSEAAMTVLSGHVVVCIFGDVSSALIGLRNLVMPLRASNFHYHELKHIVFVGSIEYLKREWETLHNFPKVSILPGTPLSRADLRAVNINLCDMCVILSANQNNIDDTSLQDKECILASLNIKSMQFDDSIGVLQANSQGFTPPGMDRSSPDNSPVHGMLRQPSITTGVNIPIITELVNDTNVQFLDQDDDDDPDTELYLTQPFACGTAFAVSVLDSLMSATYFNDNILTLIRTLVTGGATPELEALIAEENALRGGYSTPQTLANRDRCRVAQLALLDGPFADLGDGGCYGDLFCKALKTYNMLCFGIYRLRDAHLSTPSQCTKRYVITNPPYEFELVPTDLIFCLMQFDHNAGQSRASLSHSSHSSQSSSKKSSSVHSIPSTANRQNRPKSRESRDKQKYVQEERL.

The disordered stretch occupies residues 1-36; it reads MSSNIHANHLSLDASSSSSSSSSSSSSSSSSSSVHE. The Extracellular portion of the chain corresponds to 1–59; it reads MSSNIHANHLSLDASSSSSSSSSSSSSSSSSSSVHEPKMDALIIPVTMEVPCDSRGQRM. Positions 15 to 33 are enriched in low complexity; it reads SSSSSSSSSSSSSSSSSSS. The chain crosses the membrane as a helical span at residues 60-80; that stretch reads WWAFLASSMVTFFGGLFIILL. Residues 81-151 lie on the Cytoplasmic side of the membrane; it reads WRTLKYLWTV…MISAQTLTGR (71 aa). 3 S-palmitoyl cysteine lipidation sites follow: cysteine 91, cysteine 92, and cysteine 94. A helical membrane pass occupies residues 152–172; sequence VLVVLVFALSIGALVIYFIDS. Residues 173-187 are Extracellular-facing; the sequence is SNPIESCQNFYKDFT. Residues 188 to 208 traverse the membrane as a helical segment; the sequence is LQIDMAFNVFFLLYFGLRFIA. Over 209–212 the chain is Cytoplasmic; it reads ANDK. The chain crosses the membrane as a helical span at residues 213–233; that stretch reads LWFWLEVNSVVDFFTVPPVFV. The Extracellular segment spans residues 234–237; the sequence is SVYL. Residues 238 to 258 form a helical; Voltage-sensor membrane-spanning segment; the sequence is NRSWLGLRFLRALRLIQFSEI. Topologically, residues 259–273 are cytoplasmic; it reads LQFLNILKTSNSIKL. A helical membrane pass occupies residues 274–294; the sequence is VNLLSIFISTWLTAAGFIHLV. At 295–308 the chain is on the extracellular side; sequence ENSGDPWENFQNNQ. The segment at residues 309–331 is an intramembrane region (pore-forming); sequence ALTYWECVYLLMVTMSTVGYGDV. Positions 325-328 match the Selectivity for potassium motif; sequence TVGY. Topologically, residues 332-340 are extracellular; it reads YAKTTLGRL. A helical transmembrane segment spans residues 341 to 361; it reads FMVFFILGGLAMFASYVPEII. At 362–1151 the chain is on the cytoplasmic side; the sequence is ELIGNRKKYG…KQKYVQEERL (790 aa). The 143-residue stretch at 380 to 522 folds into the RCK N-terminal 1 domain; the sequence is RKHIVVCGHI…WNWKEGDDAI (143 aa). Positions 412, 435, and 437 each coordinate Mg(2+). The segment S7 stretch occupies residues 529–549; it reads LGFIAQSCLAQGLSTMLANLF. The tract at residues 586–606 is segment S8; sequence LSFPTVCELCFVKLKLLMIAI. Residues 650–654 form a heme-binding motif region; that stretch reads CKACH. The tract at residues 674–702 is disordered; that stretch reads EQPSTLSPKKKQRNGGMRNSPNSSPKLMR. Threonine 678 is modified (phosphothreonine). Phosphoserine is present on residues serine 680, serine 693, and serine 697. The tract at residues 752 to 772 is segment S9; it reads VLSGHVVVCIFGDVSSALIGL. The 145-residue stretch at 754–898 folds into the RCK N-terminal 2 domain; the sequence is SGHVVVCIFG…MDRSSPDNSP (145 aa). Phosphothreonine is present on threonine 885. Serine 893 and serine 897 each carry phosphoserine. The Calcium bowl motif lies at 918-940; it reads TELVNDTNVQFLDQDDDDDPDTE. 4 residues coordinate Ca(2+): glutamine 927, aspartate 930, aspartate 933, and aspartate 935. The interval 947–967 is segment S10; it reads FACGTAFAVSVLDSLMSATYF. A compositionally biased stretch (low complexity) spans 1101–1126; sequence RASLSHSSHSSQSSSKKSSSVHSIPS. Positions 1101–1151 are disordered; it reads RASLSHSSHSSQSSSKKSSSVHSIPSTANRQNRPKSRESRDKQKYVQEERL. Positions 1135 to 1151 are enriched in basic and acidic residues; sequence KSRESRDKQKYVQEERL. Phosphoserine occurs at positions 1136 and 1139.

This sequence belongs to the potassium channel family. Calcium-activated (TC 1.A.1.3) subfamily. KCa1.1/KCNMA1 sub-subfamily. In terms of assembly, homotetramer; which constitutes the calcium-activated potassium channel. Interacts with beta subunits KCNMB1, KCNMB2, KCNMB3 and KCNMB4. Interacts with gamma subunits LRRC26, LRRC38, LRRC52 and LRRC55. Beta and gamma subunits are accessory, and modulate its activity. Interacts with RAB11B. In terms of processing, phosphorylated. Phosphorylation by kinases such as PKA and/or PKG. In smooth muscles, phosphorylation affects its activity. Palmitoylation by ZDHHC22 and ZDHHC23 within the intracellular linker between the S0 and S1 transmembrane domains regulates localization to the plasma membrane. Depalmitoylated by LYPLA1 and LYPLAL1, leading to retard exit from the trans-Golgi network.

The protein resides in the cell membrane. The catalysed reaction is K(+)(in) = K(+)(out). With respect to regulation, ethanol and carbon monoxide-bound heme increase channel activation. Heme inhibits channel activation. In terms of biological role, potassium channel activated by both membrane depolarization or increase in cytosolic Ca(2+) that mediates export of K(+). It is also activated by the concentration of cytosolic Mg(2+). Its activation dampens the excitatory events that elevate the cytosolic Ca(2+) concentration and/or depolarize the cell membrane. It therefore contributes to repolarization of the membrane potential. Plays a key role in controlling excitability in a number of systems, such as regulation of the contraction of smooth muscle, the tuning of hair cells in the cochlea, regulation of transmitter release, and innate immunity. In smooth muscles, its activation by high level of Ca(2+), caused by ryanodine receptors in the sarcoplasmic reticulum, regulates the membrane potential. In cochlea cells, its number and kinetic properties partly determine the characteristic frequency of each hair cell and thereby helps to establish a tonotopic map. Kinetics of KCNMA1 channels are determined by alternative splicing, phosphorylation status and its combination with modulating beta subunits. Highly sensitive to both iberiotoxin (IbTx) and charybdotoxin (CTX). The polypeptide is Calcium-activated potassium channel subunit alpha-1 (KCNMA1) (Macaca mulatta (Rhesus macaque)).